Consider the following 931-residue polypeptide: Scaffold attachment factor B1 (931 aa).

Residues 1 to 24 (MAETLSGLGDSGAASAAAVSSAAS) show a composition bias toward low complexity. Residues 1-35 (MAETLSGLGDSGAASAAAVSSAASETGTRRLSDLR) are disordered. An N-acetylalanine modification is found at Ala2. Residues Ser24 and Ser55 each carry the phosphoserine modification. The 35-residue stretch at 31-65 (LSDLRVIDLRAELRKRNLTSSGNKSVLMERLKKAI) folds into the SAP domain. A disordered region spans residues 64 to 121 (AIEEEGGNPDEIEVISEGNKKMPKRPSKGKKPEDEGVEDNGLEENSGDGQEDVETSLE). Over residues 67–77 (EEGGNPDEIEV) the composition is skewed to acidic residues. Ser79 carries the post-translational modification Phosphoserine. A compositionally biased stretch (acidic residues) spans 98–118 (EGVEDNGLEENSGDGQEDVET). Glycyl lysine isopeptide (Lys-Gly) (interchain with G-Cter in SUMO2) cross-links involve residues Lys171 and Lys185. Ser194, Ser196, and Ser208 each carry phosphoserine. Disordered stretches follow at residues 205–304 (EEAS…TRCQ) and 316–430 (KREP…GRNF). Over residues 224 to 233 (CKSEPVKEEG) the composition is skewed to basic and acidic residues. Lys230 is covalently cross-linked (Glycyl lysine isopeptide (Lys-Gly) (interchain with G-Cter in SUMO)). A compositionally biased stretch (acidic residues) spans 267 to 287 (EEEEEEEEEEEQEEEQEEEGD). A Glycyl lysine isopeptide (Lys-Gly) (interchain with G-Cter in SUMO) cross-link involves residue Lys316. The segment covering 341 to 356 (EQSSTAAQLPETTSQE) has biased composition (polar residues). Residues 368 to 380 (EPRDSKDDVKKFA) are compositionally biased toward basic and acidic residues. Lys403 is covalently cross-linked (Glycyl lysine isopeptide (Lys-Gly) (interchain with G-Cter in SUMO2)). 2 positions are modified to phosphoserine: Ser405 and Ser406. A compositionally biased stretch (basic and acidic residues) spans 412–423 (DTKRLSREEKGR). Lys414 participates in a covalent cross-link: Glycyl lysine isopeptide (Lys-Gly) (interchain with G-Cter in SUMO2). Residues 428 to 506 (RNFWVSGLSS…KMISVEKAKS (79 aa)) form the RRM domain. Ser437 is subject to Phosphoserine. Basic and acidic residues-rich tracts occupy residues 500–573 (SVEK…ERSR) and 581–592 (GTERTVVMDKSK). 4 disordered regions span residues 500–663 (SVEK…WERE), 691–720 (RLER…LRRQ), 759–843 (RYHS…PRRD), and 872–931 (RWQG…QQTQ). Residues Lys505, Lys536, Lys565, and Lys592 each participate in a glycyl lysine isopeptide (Lys-Gly) (interchain with G-Cter in SUMO2) cross-link. The interaction with POLR2A; SFRS1; SFRS9 and SFRS10 stretch occupies residues 550–816 (TDDGSTEKSK…RHGGPERHGR (267 aa)). Residue Lys600 forms a Glycyl lysine isopeptide (Lys-Gly) (interchain with G-Cter in SUMO1); alternate linkage. Residue Lys600 forms a Glycyl lysine isopeptide (Lys-Gly) (interchain with G-Cter in SUMO2); alternate linkage. Residues Ser602, Ser604, Ser623, and Ser626 each carry the phosphoserine modification. Positions 603–663 (GSKERASKSQ…QRLQAQWERE (61 aa)) are enriched in basic and acidic residues. The Nuclear localization signal signature appears at 621–638 (KRSVVSFDKVKESRKSRD). Lys629 is subject to N6-acetyllysine. Residues 759-820 (RYHSDFSRQD…PERHGRDSRD (62 aa)) are compositionally biased toward basic and acidic residues. Arg834 is subject to Omega-N-methylarginine. Asymmetric dimethylarginine occurs at positions 892, 898, 908, and 914.

As to quaternary structure, monomer and homodimer. Interacts with KHDRBS3. Interacts with CLK2. Interacts with POLR2A, ASF/SRSF1, SRp30c/SRFS9 and TRA2B/SFRS10. Interacts with SRPK1 and inhibits its activity. Interacts with RBMX. Interacts with FUS. Interacts with ZBED4. Phosphorylated by CDC-like kinase 2 (CLK2). Post-translationally, sumoylated by PIAS1 with SUMO1 and SUMO2/3, desumoylated by SENP1. Sumoylation is required for transcriptional repressor activity.

It is found in the nucleus. In terms of biological role, binds to scaffold/matrix attachment region (S/MAR) DNA and forms a molecular assembly point to allow the formation of a 'transcriptosomal' complex (consisting of SR proteins and RNA polymerase II) coupling transcription and RNA processing. Functions as an estrogen receptor corepressor and can also bind to the HSP27 promoter and decrease its transcription. Thereby acts as a negative regulator of cell proliferation. When associated with RBMX, binds to and stimulates transcription from the SREBF1 promoter. The chain is Scaffold attachment factor B1 (Safb) from Rattus norvegicus (Rat).